The following is an 888-amino-acid chain: Tyrosine-protein kinase receptor UFO (888 aa).

The signal sequence occupies residues 1 to 18; sequence MGRVPLAWWLALCCWGCA. The interaction with GAS6 stretch occupies residues 19–86; that stretch reads AHKDTQTEAG…QTQVPLGEDW (68 aa). Residues 19 to 445 are Extracellular-facing; the sequence is AHKDTQTEAG…PPRAFSWPWW (427 aa). 2 consecutive Ig-like C2-type domains span residues 30–122 and 133–216; these read PFVG…TFVS and PYFL…ATIT. Asn37 is a glycosylation site (N-linked (GlcNAc...) asparagine). Residues Cys50 and Cys111 are joined by a disulfide bond. Asn151 and Asn192 each carry an N-linked (GlcNAc...) asparagine glycan. A disulfide bridge links Cys154 with Cys199. 2 consecutive Fibronectin type-III domains span residues 221–325 and 330–422; these read RPHH…TTEG and PPEN…PWRP. N-linked (GlcNAc...) asparagine glycans are attached at residues Asn333, Asn339, and Asn395. A helical membrane pass occupies residues 446–466; that stretch reads YVLLGALVAAACVLILALFLV. Over 467–888 the chain is Cytoplasmic; sequence HRRKKETRYG…PAPPGQEDGA (422 aa). One can recognise a Protein kinase domain in the interval 530–801; the sequence is VALGKTLGEG…ELREDLENTL (272 aa). ATP is bound by residues 536 to 544 and Lys561; that span reads LGEGEFGAV. Asp666 (proton acceptor) is an active-site residue. A phosphotyrosine; by autocatalysis mark is found at Tyr697, Tyr773, and Tyr815. The disordered stretch occupies residues 820–846; sequence EGGSHLEPRGAAGGADPPTQPDPKDSC. The residue at position 860 (Tyr860) is a Phosphotyrosine; by autocatalysis. A disordered region spans residues 865 to 888; that stretch reads STAPGPTLSADRGCPAPPGQEDGA.

The protein belongs to the protein kinase superfamily. Tyr protein kinase family. AXL/UFO subfamily. As to quaternary structure, heterodimer and heterotetramer with ligand GAS6. Interacts with CBL, GRB2, LCK, NCK2, PIK3R1, PIK3R2, PIK3R3, PLCG1, SOCS1 and TNS2. Part of a complex including AXL, TNK2 and GRB2, in which GRB2 promotes AXL recruitment by TNK2. Post-translationally, monoubiquitinated upon GAS6-binding. A very small proportion of the receptor could be subjected to polyubiquitination in a very transient fashion. Phosphorylated at tyrosine residues by autocatalysis, which activates kinase activity. As to expression, in distinct substructures of a broad spectrum of developing tissues (in the late embryogenesis). In cells forming organ capsules as well as in connective tissue structures (in adult).

Its subcellular location is the cell membrane. It carries out the reaction L-tyrosyl-[protein] + ATP = O-phospho-L-tyrosyl-[protein] + ADP + H(+). Its activity is regulated as follows. Activated by GAS6-binding and subsequent autophosphorylation. Functionally, receptor tyrosine kinase that transduces signals from the extracellular matrix into the cytoplasm by binding growth factor GAS6 and which is thus regulating many physiological processes including cell survival, cell proliferation, migration and differentiation. Ligand binding at the cell surface induces dimerization and autophosphorylation of AXL. Following activation by ligand, AXL binds and induces tyrosine phosphorylation of PI3-kinase subunits PIK3R1, PIK3R2 and PIK3R3; but also GRB2, PLCG1, LCK and PTPN11. Other downstream substrate candidates for AXL are CBL, NCK2, SOCS1 and TNS2. Recruitment of GRB2 and phosphatidylinositol 3 kinase regulatory subunits by AXL leads to the downstream activation of the AKT kinase. GAS6/AXL signaling plays a role in various processes such as endothelial cell survival during acidification by preventing apoptosis, optimal cytokine signaling during human natural killer cell development, hepatic regeneration, gonadotropin-releasing hormone neuron survival and migration, platelet activation, or regulation of thrombotic responses. Also plays an important role in inhibition of Toll-like receptors (TLRs)-mediated innate immune response. The sequence is that of Tyrosine-protein kinase receptor UFO (Axl) from Mus musculus (Mouse).